The following is a 380-amino-acid chain: Tubby-like F-box protein 9 (380 aa).

In terms of domain architecture, F-box spans 30–76 (PFSWSELPEELLREILIRVETVDGGDWPSRRNVVACAGVCRSWRILT). The disordered stretch occupies residues 258 to 283 (SSRSSPVFRSHSKPLRSNSASCSDSG). Polar residues predominate over residues 272–283 (LRSNSASCSDSG).

This sequence belongs to the TUB family. Part of a SCF (SKP1-cullin-F-box) protein ligase complex. Interacts with SKP1A/ASK1 and XERICO. As to expression, ubiquitous.

It participates in protein modification; protein ubiquitination. Component of SCF(ASK-cullin-F-box) E3 ubiquitin ligase complexes, which may mediate the ubiquitination and subsequent proteasomal degradation of target proteins. Confers sensitivity to ABA during seed germination and early seedling development. This Arabidopsis thaliana (Mouse-ear cress) protein is Tubby-like F-box protein 9.